The sequence spans 186 residues: Ribosome-recycling factor (186 aa).

The protein belongs to the RRF family.

The protein localises to the cytoplasm. Functionally, responsible for the release of ribosomes from messenger RNA at the termination of protein biosynthesis. May increase the efficiency of translation by recycling ribosomes from one round of translation to another. This Wolinella succinogenes (strain ATCC 29543 / DSM 1740 / CCUG 13145 / JCM 31913 / LMG 7466 / NCTC 11488 / FDC 602W) (Vibrio succinogenes) protein is Ribosome-recycling factor.